Consider the following 575-residue polypeptide: Cyclic nucleotide-gated channel alpha-4 (575 aa).

Residues 1–38 (MSQDSKVKTTESTPPAPTKARKWLPVLDPSGDYYYWWL) are Cytoplasmic-facing. A helical membrane pass occupies residues 39 to 60 (NTMVFPIMYNLIIVVCRACFPD). Residues 61-70 (LQHSYLVAWF) are Extracellular-facing. A helical membrane pass occupies residues 71–91 (VLDYTSDLLYLLDIGVRFHTG). The Cytoplasmic portion of the chain corresponds to 92–116 (FLEQGILVVDKSMIASRYVRTWSFL). A helical transmembrane segment spans residues 117–135 (LDLASLVPTDAAYVQLGPH). The Extracellular segment spans residues 136 to 140 (IPTLR). Residues 141 to 159 (LNRFLRVPRLFEAFDRTET) form a helical membrane-spanning segment. The Cytoplasmic segment spans residues 160–166 (RTAYPNA). The interval 164-272 (PNAFRIAKLM…GSMSSVIYNM (109 aa)) is ion conduction pathway. A helical transmembrane segment spans residues 167-190 (FRIAKLMIYIFVVIHWNSCLYFAL). Over 191–213 (SRYLGFGRDAWVYPDPAQPGFER) the chain is Extracellular. The next 2 membrane-spanning stretches (helical) occupy residues 214–248 (LRRQYLYSFYFSTLILTTVGDTPLPAREEEYLFMV) and 249–273 (GDFLLAVMGFATIMGSMSSVIYNMN). The selectivity filter stretch occupies residues 231-234 (TVGD). The interval 274–350 (TADAAFYPDH…STLSRVQIFQ (77 aa)) is C-linker. Topologically, residues 274–575 (TADAAFYPDH…AGQEGPSGLE (302 aa)) are cytoplasmic. Residues 292–302 (LQHVNRRLERR) carry the IQ-type motif. 348 to 471 (IFQNCEASLL…AVMEEKGREI (124 aa)) is a binding site for a nucleoside 3',5'-cyclic phosphate. The tract at residues 354–474 (ASLLEELVLK…EEKGREILLK (121 aa)) is cyclic nucleotide-binding domain. G414, S417, R430, and T431 together coordinate 3',5'-cyclic GMP. 3',5'-cyclic AMP contacts are provided by R430 and T431. Residues 493–547 (TESRLKGLDQQLDDLQTKFARLLAELESSALKIAYRIERLEWQTREWPMPDDMGE) adopt a coiled-coil conformation. The tract at residues 536 to 575 (TREWPMPDDMGEADDEAEPGEGTSKDGEEKAGQEGPSGLE) is disordered. Residues 544–554 (DMGEADDEAEP) show a composition bias toward acidic residues. Positions 558-567 (TSKDGEEKAG) are enriched in basic and acidic residues.

This sequence belongs to the cyclic nucleotide-gated cation channel (TC 1.A.1.5) family. CNGA4 subfamily. In terms of assembly, the olfactory cyclic nucleotide-gated channel is an heterotetramer composed of CNGA2, CNGA4 and CNGB1b subunits with 2:1:1 stoichiometry. As to expression, expressed in the olfactory epithelium.

It localises to the cell projection. The protein localises to the cilium membrane. It carries out the reaction Ca(2+)(in) = Ca(2+)(out). The catalysed reaction is Na(+)(in) = Na(+)(out). The enzyme catalyses K(+)(in) = K(+)(out). It catalyses the reaction NH4(+)(in) = NH4(+)(out). It carries out the reaction Rb(+)(in) = Rb(+)(out). The catalysed reaction is Li(+)(in) = Li(+)(out). The enzyme catalyses Cs(+)(in) = Cs(+)(out). With respect to regulation, ca(2+)-calmodulin exerts its inhibitory effect in cAMP sensitivity by binding to IQ-like motif of CNGA4 and preferably binds to the channel in the closed state. Inhibition by PIP3 of the CNG channel probably occurs via CGNA2 binding. Pore-forming subunit of the olfactory cyclic nucleotide-gated channel. Operates in the cilia of olfactory sensory neurons where chemical stimulation of the odorant is converted to an electrical signal. Mediates odorant-induced cAMP-dependent Ca(2+) influx triggering neuron depolarization. The rise of intracellular Ca(2+) levels potentiates the olfactory response by activating Ca(2+)-dependent Cl(-) channels, but it also serves as a negative feedback signal to desensitize the channel for rapid adaptation to odorants. Conducts cGMP- and cAMP-gated ion currents, with permeability for monovalent and divalent cations. Conducts cAMP- and cGMP-gated ion currents, with permeability for monovalent and divalent cations. May conduct nitric oxide-gated Ca(2+) currents relevant to neurons of vomeronasal organ, a system involved in the perception of pheromones. This Mus musculus (Mouse) protein is Cyclic nucleotide-gated channel alpha-4.